Here is a 563-residue protein sequence, read N- to C-terminus: Probable tRNA (uracil-O(2)-)-methyltransferase (563 aa).

The C3H1-type zinc finger occupies 536-563 (TIRKAPCWMSLHHPDGCPVGQEACRYEH).

It belongs to the TRM44 family.

The protein resides in the cytoplasm. The enzyme catalyses uridine(44) in tRNA(Ser) + S-adenosyl-L-methionine = 2'-O-methyluridine(44) in tRNA(Ser) + S-adenosyl-L-homocysteine + H(+). Probable adenosyl-L-methionine (AdoMet)-dependent tRNA (uracil-O(2)-)-methyltransferase. In Caenorhabditis elegans, this protein is Probable tRNA (uracil-O(2)-)-methyltransferase.